The sequence spans 508 residues: MAATPPSSQHRRPLSSSASAASLAGKPRGGGLLLGRYELGRLLGHGTFAKVYQARSADSGEPVAIKVLDKEKAMRHGLVPHIKREIAILRRVRHPNIVRLFEVMATKSKIYFVMELVRGGELFGRVAKGRLKEDTARRYFQQLVSAVGFCHARGVFHRDLKPENLLVDEHGDLKVSDFGLSAVADQFHPDGLLHTFCGTPSYVAPEVLARRGYDGAKADIWSCGIILFVLMAGYLPFHDQNLMAMYRKIYRGEFRCPRWFSKDLSSLLNRILDTNPETRITVKEVMESRWFQKGFRPVRFYVEDDQVHSLADGDNDMPELEPSEPPPPPPFPPPPPQQDDDGEESGWESDSSVASCPATLSSEERRQRPLGSLTRPASLNAFDIISFSKGFDLSGLFEERGSEVRFISAEPMQTIITKLEEIAKVKSFFVRRKDWRVSIEGTREGLKGPLTIGAEIFELTPSLVVVEVKKKAGDKEEYDDFCNRELKPGMQHLVHHMGSVPNIPSDTE.

A disordered region spans residues 1 to 24 (MAATPPSSQHRRPLSSSASAASLA). Over residues 14-24 (LSSSASAASLA) the composition is skewed to low complexity. Positions 37 to 291 (YELGRLLGHG…VKEVMESRWF (255 aa)) constitute a Protein kinase domain. ATP contacts are provided by residues 43-51 (LGHGTFAKV) and Lys66. Asp159 serves as the catalytic Proton acceptor. The segment at 177 to 206 (DFGLSAVADQFHPDGLLHTFCGTPSYVAPE) is activation loop. The disordered stretch occupies residues 311 to 372 (ADGDNDMPEL…EERRQRPLGS (62 aa)). The span at 313–322 (GDNDMPELEP) shows a compositional bias: acidic residues. Residues 323 to 337 (SEPPPPPPFPPPPPQ) show a composition bias toward pro residues. Over residues 338–347 (QDDDGEESGW) the composition is skewed to acidic residues. In terms of domain architecture, NAF spans 354 to 398 (ASCPATLSSEERRQRPLGSLTRPASLNAFDIISFSKGFDLSGLFE). Residues 401-430 (GSEVRFISAEPMQTIITKLEEIAKVKSFFV) are PPI.

The protein belongs to the protein kinase superfamily. CAMK Ser/Thr protein kinase family. SNF1 subfamily. Requires Mn(2+) as cofactor. Autophosphorylated. As to expression, expressed in roots, leaf blades and sheaths and panicles.

The catalysed reaction is L-seryl-[protein] + ATP = O-phospho-L-seryl-[protein] + ADP + H(+). It carries out the reaction L-threonyl-[protein] + ATP = O-phospho-L-threonyl-[protein] + ADP + H(+). CIPK serine-threonine protein kinases interact with CBL proteins. Binding of a CBL protein to the regulatory NAF domain of CIPK protein lead to the activation of the kinase in a calcium-dependent manner. This is CBL-interacting protein kinase 19 (CIPK19) from Oryza sativa subsp. japonica (Rice).